The primary structure comprises 427 residues: MFTREITAKDVKATEKNRIRYSSKHIKHLPPGTITEFEWKDYCPLGFRLIQELEDINHDEYMKSICNDETLRKLSTSKVGNMFLLSKDDRFLIKILRKSEIKVILEMLPGYFRHIHKYRSTLLSKNYGAHSVKPIGGVKTYFVVMSNILQSDVFMNKVYDLKGSSQGRTNKKIKVRDKTILKDIDLDFCFYVDSLARHRLIKQTKLDCELLEDEGIMDYSLMLGLQVKGSCHGSIDELIPVYDSFTSRGSVDSNSSKFMKTASNSPDRSSSTMYSCTPSRNSVDSENSVNIQSVASISPSPAQTNASDSPYESLVSKTNLTNIFQNSSSTNFGMKIPGRARRVGRGESGSVVGKQSREGGEEWYDVILYLGIIDIFQDYGVRKRLEHCYKSIQHSSKTISAVHPKMYSSRFQDFVSQIFLPDEDPSH.

The 419-residue stretch at Met-1–Phe-419 folds into the PIPK domain. Disordered regions lie at residues Ser-247 to Asn-287 and Met-334 to Gln-355. The interval Tyr-379–Ser-400 is activation loop.

It catalyses the reaction a 1,2-diacyl-sn-glycero-3-phospho-(1D-myo-inositol 4-phosphate) + ATP = a 1,2-diacyl-sn-glycero-3-phospho-(1D-myo-inositol-4,5-bisphosphate) + ADP + H(+). This chain is Phosphatidylinositol 4-phosphate 5-kinase 10 (PIP5K10), found in Arabidopsis thaliana (Mouse-ear cress).